Reading from the N-terminus, the 328-residue chain is Phosphate acyltransferase (328 aa).

Belongs to the PlsX family. Homodimer. Probably interacts with PlsY.

The protein resides in the cytoplasm. The catalysed reaction is a fatty acyl-[ACP] + phosphate = an acyl phosphate + holo-[ACP]. Its pathway is lipid metabolism; phospholipid metabolism. Its function is as follows. Catalyzes the reversible formation of acyl-phosphate (acyl-PO(4)) from acyl-[acyl-carrier-protein] (acyl-ACP). This enzyme utilizes acyl-ACP as fatty acyl donor, but not acyl-CoA. In Campylobacter jejuni subsp. jejuni serotype O:23/36 (strain 81-176), this protein is Phosphate acyltransferase.